Reading from the N-terminus, the 336-residue chain is F420-dependent glucose-6-phosphate dehydrogenase (336 aa).

Residue Asp-39 participates in coenzyme F420-(gamma-Glu)n binding. His-40 serves as the catalytic Proton donor. Coenzyme F420-(gamma-Glu)n contacts are provided by residues Thr-76 and 107 to 108; that span reads SG. Glu-109 functions as the Proton acceptor in the catalytic mechanism. Coenzyme F420-(gamma-Glu)n is bound by residues Asn-112, 177-178, and 180-181; these read GG and VV. 4 residues coordinate substrate: Thr-195, Lys-198, Lys-259, and Arg-283.

Belongs to the F420-dependent glucose-6-phosphate dehydrogenase family. Homodimer.

The catalysed reaction is oxidized coenzyme F420-(gamma-L-Glu)(n) + D-glucose 6-phosphate + H(+) = 6-phospho-D-glucono-1,5-lactone + reduced coenzyme F420-(gamma-L-Glu)(n). In terms of biological role, catalyzes the coenzyme F420-dependent oxidation of glucose 6-phosphate (G6P) to 6-phosphogluconolactone. The protein is F420-dependent glucose-6-phosphate dehydrogenase of Tsukamurella paurometabola (strain ATCC 8368 / DSM 20162 / CCUG 35730 / CIP 100753 / JCM 10117 / KCTC 9821 / NBRC 16120 / NCIMB 702349 / NCTC 13040) (Corynebacterium paurometabolum).